A 212-amino-acid chain; its full sequence is MAAVLRAVARSPGPAAWGRPLHRLCCCGGQDPRRWVGSGPPHSKEKPLGPETEKFQMVYRFDAIKAFGYLSRLKVAQTALTVAALPPGLYCYSQGLMPFSSLCLAGGVAGFALAMLCWMSHFFRRLVGILYVNEEGTVLRVAHLTFWGRRQDTYCPVADVIPMTESPDRPQELFMRIQQYSGKQTFYLTLRYGRVLDQERFTQVFGVLDALK.

Topologically, residues 1 to 78 (MAAVLRAVAR…YLSRLKVAQT (78 aa)) are mitochondrial matrix. Residues 79–99 (ALTVAALPPGLYCYSQGLMPF) traverse the membrane as a helical segment. Residues 100–101 (SS) are Mitochondrial intermembrane-facing. The chain crosses the membrane as a helical span at residues 102 to 122 (LCLAGGVAGFALAMLCWMSHF). Over 123–212 (FRRLVGILYV…QVFGVLDALK (90 aa)) the chain is Mitochondrial matrix.

The protein belongs to the TMEM186 family. Part of the mitochondrial complex I assembly/MCIA complex that comprises at least the core subunits TMEM126B, NDUFAF1, ECSIT and ACAD9 and complement subunits such as COA1 and TMEM186. Interacts with MT-ND3.

Its subcellular location is the mitochondrion inner membrane. Its function is as follows. As part of the MCIA complex, required for efficient assembly of the mitochondrial complex I. This is Transmembrane protein 186 from Bos taurus (Bovine).